The primary structure comprises 31 residues: Cytochrome b6-f complex subunit 6 (31 aa).

Residues 4–24 (ITSYFGFLLAVLIITSSLFIG) traverse the membrane as a helical segment.

This sequence belongs to the PetL family. As to quaternary structure, the 4 large subunits of the cytochrome b6-f complex are cytochrome b6, subunit IV (17 kDa polypeptide, PetD), cytochrome f and the Rieske protein, while the 4 small subunits are PetG, PetL, PetM and PetN. The complex functions as a dimer.

It localises to the plastid. The protein localises to the chloroplast thylakoid membrane. In terms of biological role, component of the cytochrome b6-f complex, which mediates electron transfer between photosystem II (PSII) and photosystem I (PSI), cyclic electron flow around PSI, and state transitions. PetL is important for photoautotrophic growth as well as for electron transfer efficiency and stability of the cytochrome b6-f complex. This chain is Cytochrome b6-f complex subunit 6, found in Phaseolus vulgaris (Kidney bean).